The chain runs to 571 residues: Proline--tRNA ligase (571 aa).

This sequence belongs to the class-II aminoacyl-tRNA synthetase family. ProS type 1 subfamily. As to quaternary structure, homodimer.

Its subcellular location is the cytoplasm. It carries out the reaction tRNA(Pro) + L-proline + ATP = L-prolyl-tRNA(Pro) + AMP + diphosphate. Functionally, catalyzes the attachment of proline to tRNA(Pro) in a two-step reaction: proline is first activated by ATP to form Pro-AMP and then transferred to the acceptor end of tRNA(Pro). As ProRS can inadvertently accommodate and process non-cognate amino acids such as alanine and cysteine, to avoid such errors it has two additional distinct editing activities against alanine. One activity is designated as 'pretransfer' editing and involves the tRNA(Pro)-independent hydrolysis of activated Ala-AMP. The other activity is designated 'posttransfer' editing and involves deacylation of mischarged Ala-tRNA(Pro). The misacylated Cys-tRNA(Pro) is not edited by ProRS. The polypeptide is Proline--tRNA ligase (Acinetobacter baumannii (strain AB307-0294)).